The primary structure comprises 212 residues: Small ribosomal subunit protein eS1 (212 aa).

This sequence belongs to the eukaryotic ribosomal protein eS1 family.

This is Small ribosomal subunit protein eS1 from Ignicoccus hospitalis (strain KIN4/I / DSM 18386 / JCM 14125).